The primary structure comprises 493 residues: MARAPLGVLLLLGLLGRGVGKNEELRLYHHLFNNYDPGSRPVREPEDTVTISLKVTLTNLISLNEKEETLTTSVWIGIDWQDYRLNYSKDDFGGIETLRVPSELVWLPEIVLENNIDGQFGVAYDANVLVYEGGSVTWLPPAIYRSVCAVEVTYFPFDWQNCSLIFRSQTYNAEEVEFTFAVDNDGKTINKIDIDTEAYTENGEWAIDFCPGVIRRHHGGATDGPGETDVIYSLIIRRKPLFYVINIIVPCVLISGLVLLAYFLPAQAGGQKCTVSINVLLAQTVFLFLIAQKIPETSLSVPLLGRFLIFVMVVATLIVMNCVIVLNVSQRTPTTHAMSPRLRHVLLELLPRLLGSPPPPEAPRAASPPRRASSVGLLLRAEELILKKPRSELVFEGQRHRQGTWTAAFCQSLGAAAPEVRCCVDAVNFVAESTRDQEATGEEVSDWVRMGNALDNICFWAALVLFSVGSSLIFLGAYFNRVPDLPYAPCIQP.

A signal peptide spans methionine 1 to glycine 20. Residues lysine 21 to lysine 239 are Extracellular-facing. Asparagine 86 and asparagine 161 each carry an N-linked (GlcNAc...) asparagine glycan. Cysteine 148 and cysteine 162 are disulfide-bonded. Residues proline 240 to leucine 264 traverse the membrane as a helical segment. Topologically, residues proline 265 to lysine 272 are cytoplasmic. A helical membrane pass occupies residues cysteine 273 to alanine 291. Residues glutamine 292–arginine 306 lie on the Extracellular side of the membrane. The chain crosses the membrane as a helical span at residues phenylalanine 307–valine 328. The Cytoplasmic portion of the chain corresponds to serine 329 to asparagine 456. Residues isoleucine 457 to asparagine 480 traverse the membrane as a helical segment. Residues arginine 481–proline 493 lie on the Extracellular side of the membrane.

This sequence belongs to the ligand-gated ion channel (TC 1.A.9) family. Acetylcholine receptor (TC 1.A.9.1) subfamily. Epsilon/CHRNE sub-subfamily. As to quaternary structure, pentamer of two alpha chains, and one each of the beta, delta, and gamma (in immature muscle) or epsilon (in mature muscle) chains. The muscle heteropentamer composed of alpha-1, beta-1, delta, epsilon subunits interacts with the alpha-conotoxin ImII.

It localises to the postsynaptic cell membrane. Its subcellular location is the cell membrane. The catalysed reaction is K(+)(in) = K(+)(out). The enzyme catalyses Na(+)(in) = Na(+)(out). Functionally, after binding acetylcholine, the AChR responds by an extensive change in conformation that affects all subunits and leads to opening of an ion-conducting channel across the plasma membrane. This Homo sapiens (Human) protein is Acetylcholine receptor subunit epsilon.